The primary structure comprises 150 residues: Transcription antitermination protein NusB (150 aa).

The protein belongs to the NusB family.

Its function is as follows. Involved in transcription antitermination. Required for transcription of ribosomal RNA (rRNA) genes. Binds specifically to the boxA antiterminator sequence of the ribosomal RNA (rrn) operons. In Saccharophagus degradans (strain 2-40 / ATCC 43961 / DSM 17024), this protein is Transcription antitermination protein NusB.